The primary structure comprises 133 residues: Stage III sporulation protein AD (133 aa).

The next 3 helical transmembrane spans lie at 2-22 (QIDI…SLIV), 29-49 (FAFL…VDQI), and 108-128 (ILIL…ILGL).

The protein localises to the cell membrane. The protein is Stage III sporulation protein AD (spoIIIAD) of Bacillus subtilis (strain 168).